Here is a 130-residue protein sequence, read N- to C-terminus: Small ribosomal subunit protein uS8 (130 aa).

This sequence belongs to the universal ribosomal protein uS8 family. Part of the 30S ribosomal subunit. Contacts proteins S5 and S12.

Its function is as follows. One of the primary rRNA binding proteins, it binds directly to 16S rRNA central domain where it helps coordinate assembly of the platform of the 30S subunit. The protein is Small ribosomal subunit protein uS8 of Yersinia pseudotuberculosis serotype O:1b (strain IP 31758).